Here is a 132-residue protein sequence, read N- to C-terminus: Bombinin-like peptides (132 aa).

An N-terminal signal peptide occupies residues 1-18 (MNFKYIIAVSFLIASAYA). The propeptide occupies 19-42 (RSEEYDIQSLSQRDVLEEESLRKI). The residue at position 68 (F68) is a Phenylalanine amide. Positions 72 to 112 (TAEDHEVMKRLEAAMRDLDSLDYPEEASERETRGFNQEEKE) are excised as a propeptide. L131 carries the post-translational modification Leucine amide.

It belongs to the bombinin family. As to expression, expressed by the skin glands.

The protein resides in the secreted. Its function is as follows. Has antimicrobial activity against Gram-negative bacterium E.coli (MIC=26.3 uM), Gram-positive bacterium S.aureus (MIC=26.3 uM) and yeast C.albicans (MIC=52.5 uM). Has moderate hemolytic activity towards human erythrocytes at a concentration of 52.2 uM. Has no antimicrobial activity at concentrations up to 161 uM. Has moderate hemolytic activity towards human erythrocytes at a concentration of 40.3 uM. The sequence is that of Bombinin-like peptides from Bombina orientalis (Oriental fire-bellied toad).